The sequence spans 488 residues: Catalase (488 aa).

The disordered stretch occupies residues 1 to 24 (MTDRRNLTTNQGVPIGDNQNSMTA). Residues 7 to 23 (LTTNQGVPIGDNQNSMT) show a composition bias toward polar residues. Residues histidine 55 and asparagine 128 contribute to the active site. Tyrosine 338 serves as a coordination point for heme.

This sequence belongs to the catalase family. It depends on heme as a cofactor.

It localises to the cytoplasm. The catalysed reaction is 2 H2O2 = O2 + 2 H2O. Its function is as follows. Decomposes hydrogen peroxide into water and oxygen; serves to protect cells from the toxic effects of hydrogen peroxide. This Listeria seeligeri protein is Catalase (kat).